A 289-amino-acid polypeptide reads, in one-letter code: MPKASHQDLRFAFRELLASGSCYHTASVFDPMSARIAADLGFEVGILGGSVASLQVLAAPDFALITLSEFVEQATRIGRVAQLPVLADADHGYGNALNVMRTVIELERAGVAALTIEDTLLPAQFGRKSTDLIPVEEGVGKIRAALEARVDSSLSIIARTNAGVLSTEEIIVRTQSYQKAGADAICMVGVKDFEQLEQIAGHLSVPLMLVTYANPNLHDDERLARLGVRIVVDGHAAYFAAIKATYDCLRLQRGQQNKSENLTATELSHTYTQPEDYIRWAKEYMSVDE.

S50 is a substrate binding site. Residue D88 participates in Mg(2+) binding. R159 and H235 together coordinate substrate.

The protein belongs to the isocitrate lyase/PEP mutase superfamily. Oxaloacetate decarboxylase family. As to quaternary structure, homotetramer; dimer of dimers. It depends on Mg(2+) as a cofactor.

The enzyme catalyses oxaloacetate + H(+) = pyruvate + CO2. Functionally, catalyzes the decarboxylation of oxaloacetate into pyruvate. Seems to play a role in maintaining cellular concentrations of bicarbonate and pyruvate. The polypeptide is Oxaloacetate decarboxylase 1 (Pseudomonas putida (strain W619)).